A 265-amino-acid chain; its full sequence is Thioredoxin-related transmembrane protein 2 homolog (265 aa).

A signal peptide spans 1–32; the sequence is MLIPRLDEVRRALTAFHFFNTLLALAFPVIRS. At 33-96 the chain is on the extracellular side; it reads TSLCDYVFAV…KIAGMFLFIR (64 aa). The helical transmembrane segment at 97–117 threads the bilayer; that stretch reads ADILPGIIYILACLIVTVLFP. The Cytoplasmic segment spans residues 118–265; that stretch reads EPVYNGPEQV…KKGAKAKKED (148 aa). A Thioredoxin domain is found at 126 to 230; the sequence is QVTYFQGEQL…RPLVNDSRRA (105 aa). Positions 262–265 match the Di-lysine motif motif; the sequence is KKED.

The protein resides in the membrane. In Caenorhabditis elegans, this protein is Thioredoxin-related transmembrane protein 2 homolog.